Reading from the N-terminus, the 456-residue chain is Adenylosuccinate lyase (456 aa).

Residues 15 to 16, 90 to 92, and 122 to 123 contribute to the N(6)-(1,2-dicarboxyethyl)-AMP site; these read RY, NHD, and TS. Residue His-171 is the Proton donor/acceptor of the active site. Position 248 (Gln-248) interacts with N(6)-(1,2-dicarboxyethyl)-AMP. The active-site Proton donor/acceptor is the Ser-296. N(6)-(1,2-dicarboxyethyl)-AMP is bound by residues Ser-297, 302–304, Asn-310, Arg-336, and 341–345; these read KVN and STVLR.

The protein belongs to the lyase 1 family. Adenylosuccinate lyase subfamily. As to quaternary structure, homotetramer.

It catalyses the reaction N(6)-(1,2-dicarboxyethyl)-AMP = fumarate + AMP. The catalysed reaction is (2S)-2-[5-amino-1-(5-phospho-beta-D-ribosyl)imidazole-4-carboxamido]succinate = 5-amino-1-(5-phospho-beta-D-ribosyl)imidazole-4-carboxamide + fumarate. The enzyme catalyses (2S)-2-amino-2'-deoxyadenylo-succinate = dZMP + fumarate. It functions in the pathway purine metabolism; AMP biosynthesis via de novo pathway; AMP from IMP: step 2/2. Its pathway is purine metabolism; IMP biosynthesis via de novo pathway; 5-amino-1-(5-phospho-D-ribosyl)imidazole-4-carboxamide from 5-amino-1-(5-phospho-D-ribosyl)imidazole-4-carboxylate: step 2/2. It participates in purine metabolism. Catalyzes two reactions in de novo purine nucleotide biosynthesis. Catalyzes the breakdown of 5-aminoimidazole- (N-succinylocarboxamide) ribotide (SAICAR or 2-[5-amino-1-(5-phospho-beta-D-ribosyl)imidazole-4-carboxamido]succinate) to 5-aminoimidazole-4-carboxamide ribotide (AICAR or 5-amino-1-(5-phospho-beta-D-ribosyl)imidazole-4-carboxamide) and fumarate, and of adenylosuccinate (ADS or N(6)-(1,2-dicarboxyethyl)-AMP) to adenosine monophosphate (AMP) and fumarate. In terms of biological role, (Microbial infection) Catalyzes the conversion of 2-amino-2'-deoxyadenylo-succinate to dZMP and fumarate, when the bacterium is infected by a phage that produces the substrate of this reaction, a step in the synthesis of dZTP (2-amino-2'-deoxyadenosine 5'-triphosphate), which is a nucleotide then used by the phage as a DNA polymerase substrate. The protein is Adenylosuccinate lyase of Vibrio cholerae serotype O1 (strain ATCC 39541 / Classical Ogawa 395 / O395).